The primary structure comprises 309 residues: uncharacterized protein (309 aa).

The segment covering 1 to 11 has biased composition (basic residues); sequence MPGNSRRRGAV. The tract at residues 1–69 is disordered; sequence MPGNSRRRGA…PVKRTDETET (69 aa). 3 residues coordinate S-adenosyl-L-methionine: Gly-261, Ile-281, and Leu-290.

The protein belongs to the class IV-like SAM-binding methyltransferase superfamily. RNA methyltransferase TrmH family.

This is an uncharacterized protein from Mycobacterium leprae (strain TN).